Consider the following 503-residue polypeptide: Glucosaminyl-phosphatidylinositol-acyltransferase PIGW (503 aa).

Residues 1–21 (MSQKQLKEAFVRNLSGTSVLE) lie on the Lumenal side of the membrane. Residue Asn13 is glycosylated (N-linked (GlcNAc...) asparagine). The helical transmembrane segment at 22–42 (VTQGLCFPAFCILCRGLWIIF) threads the bilayer. The Cytoplasmic portion of the chain corresponds to 43 to 48 (SQHVCS). Residues 49–71 (FSNTWSTRFLMDFVVLIVPLVIT) traverse the membrane as a helical segment. The Lumenal portion of the chain corresponds to 72–74 (LTV). The helical transmembrane segment at 75 to 97 (LSSFILLENLTVIVWGAWLLYQI) threads the bilayer. Topologically, residues 98-131 (YHRRTCYAKVPVQKVFANFLKISLESEYNPAITC) are cytoplasmic. Residues 132-152 (YRVINSVFTAIAILAVDFPLF) form a helical membrane-spanning segment. Residues 153 to 160 (PRRFAKTE) are Lumenal-facing. A helical membrane pass occupies residues 161-181 (LYGTGAMDFGVGGFIFGAAMV). The Cytoplasmic segment spans residues 182–201 (CPEVRRKSIEESRFNYLRKS). A helical transmembrane segment spans residues 202–222 (LYSVWPLVFLGMGRLVIIKSI). The Lumenal segment spans residues 223–236 (GYQEHSTEYGIHWN). Residues 237 to 257 (FFFTIIVVRLVTSLLLIIFPL) traverse the membrane as a helical segment. The Cytoplasmic portion of the chain corresponds to 258–259 (NK). Residues 260 to 280 (SWIVAVSITVVYQLALDYTPL) traverse the membrane as a helical segment. At 281 to 304 (KRILLYGTDGSGTRVGFLNANREG) the chain is on the lumenal side. The helical transmembrane segment at 305–325 (IISTLGYVTIHMAGVQTGLYV) threads the bilayer. The Cytoplasmic segment spans residues 326-339 (LKGRAQVRDWIKAT). A helical membrane pass occupies residues 340 to 360 (CWVFSVAVGFFISLHIVQVNI). The Lumenal segment spans residues 361–380 (EAVSRRMANLAFCLWVVASS). A helical membrane pass occupies residues 381–401 (LMLLSCLLLSGIILSFAQFLI). Residues 402–447 (KGSLVPCSWKLIQSPTTHKNHSESLILEAEKNQPSLCLITALNRNQ) are Cytoplasmic-facing. Ser415 is modified (phosphoserine). A helical membrane pass occupies residues 448–468 (LFFFLLSNITTGLINLTMDTL). At 469-472 (HTGA) the chain is on the lumenal side. The chain crosses the membrane as a helical span at residues 473–493 (LWTLVVLSIYMFTNCLVIYVL). The Cytoplasmic segment spans residues 494–503 (DLQGKTIKFW).

Belongs to the PIGW family.

Its subcellular location is the endoplasmic reticulum membrane. It functions in the pathway glycolipid biosynthesis; glycosylphosphatidylinositol-anchor biosynthesis. In terms of biological role, acyltransferase that catalyzes the acyl transfer from an acyl-CoA at the 2-OH position of the inositol ring of glucosaminyl phosphatidylinositol (GlcN-PI) to generate GlcN-(acyl)PI and participates in the fourth step of GPI-anchor biosynthesi. Required for the transport of GPI-anchored proteins to the plasma membrane. Acetylation during GPI-anchor biosynthesis is not essential for the subsequent mannosylation and is usually removed soon after the attachment of GPIs to proteins. This chain is Glucosaminyl-phosphatidylinositol-acyltransferase PIGW, found in Mus musculus (Mouse).